The chain runs to 393 residues: Formate-dependent phosphoribosylglycinamide formyltransferase (393 aa).

Residues 22-23 (EL) and E82 contribute to the N(1)-(5-phospho-beta-D-ribosyl)glycinamide site. ATP is bound by residues R114, K155, 160-165 (SSGKGQ), 195-198 (EGFI), and E203. The ATP-grasp domain maps to 119 to 308 (RLAAEELKLP…QFALHARAIL (190 aa)). 2 residues coordinate Mg(2+): E267 and E279. N(1)-(5-phospho-beta-D-ribosyl)glycinamide contacts are provided by residues D286, K356, and 363–364 (RR).

Belongs to the PurK/PurT family. In terms of assembly, homodimer.

The enzyme catalyses N(1)-(5-phospho-beta-D-ribosyl)glycinamide + formate + ATP = N(2)-formyl-N(1)-(5-phospho-beta-D-ribosyl)glycinamide + ADP + phosphate + H(+). It participates in purine metabolism; IMP biosynthesis via de novo pathway; N(2)-formyl-N(1)-(5-phospho-D-ribosyl)glycinamide from N(1)-(5-phospho-D-ribosyl)glycinamide (formate route): step 1/1. Functionally, involved in the de novo purine biosynthesis. Catalyzes the transfer of formate to 5-phospho-ribosyl-glycinamide (GAR), producing 5-phospho-ribosyl-N-formylglycinamide (FGAR). Formate is provided by PurU via hydrolysis of 10-formyl-tetrahydrofolate. The polypeptide is Formate-dependent phosphoribosylglycinamide formyltransferase (Pseudomonas syringae pv. tomato (strain ATCC BAA-871 / DC3000)).